We begin with the raw amino-acid sequence, 503 residues long: Transcription termination/antitermination protein NusA (503 aa).

Residues 139 to 203 (GDIINGIVKR…KGPQIFLSRV (65 aa)) form the S1 motif domain. Positions 308–378 (SHKVEVVVSQ…LDVEEVIGQL (71 aa)) constitute a KH domain.

It belongs to the NusA family. Monomer. Binds directly to the core enzyme of the DNA-dependent RNA polymerase and to nascent RNA.

The protein localises to the cytoplasm. Its function is as follows. Participates in both transcription termination and antitermination. This Rickettsia prowazekii (strain Madrid E) protein is Transcription termination/antitermination protein NusA.